We begin with the raw amino-acid sequence, 139 residues long: Large ribosomal subunit protein bL17 (139 aa).

This sequence belongs to the bacterial ribosomal protein bL17 family. Part of the 50S ribosomal subunit. Contacts protein L32.

The sequence is that of Large ribosomal subunit protein bL17 from Sphingopyxis alaskensis (strain DSM 13593 / LMG 18877 / RB2256) (Sphingomonas alaskensis).